Here is a 41-residue protein sequence, read N- to C-terminus: U15-myrmicitoxin-Tb1b (41 aa).

The first 25 residues, 1–25, serve as a signal peptide directing secretion; the sequence is MKIVKLITIFAMIATLMVTVTNGEA. His-40 bears the Histidine amide mark.

As to expression, expressed by the venom gland.

It localises to the secreted. Venom protein with unknown function. Does not induce paralysis when a high dose is administered by intrathoracic injection into the blowfly Lucilia caesar. This chain is U15-myrmicitoxin-Tb1b, found in Tetramorium bicarinatum (Tramp ant).